The chain runs to 275 residues: Arylamine N-acetyltransferase (275 aa).

The active-site Acyl-thioester intermediate is cysteine 70. Active-site residues include histidine 110 and aspartate 127.

The protein belongs to the arylamine N-acetyltransferase family. Homodimer and homotetramer.

It carries out the reaction an arylamine + acetyl-CoA = an N-acetylarylamine + CoA. Catalyzes the transfer of the acetyl group from acetyl coenzyme A to the free amino group of arylamines and hydrazines. Substrates include isoniazid, anisidine, and 4-aminoveratrole, and to a much lesser extent, p-aminobenzoic acid. This Mycolicibacterium smegmatis (Mycobacterium smegmatis) protein is Arylamine N-acetyltransferase.